The sequence spans 172 residues: 3-hydroxydecanoyl-[acyl-carrier-protein] dehydratase (172 aa).

His71 is an active-site residue.

Belongs to the thioester dehydratase family. FabA subfamily. In terms of assembly, homodimer.

Its subcellular location is the cytoplasm. It carries out the reaction a (3R)-hydroxyacyl-[ACP] = a (2E)-enoyl-[ACP] + H2O. The enzyme catalyses (3R)-hydroxydecanoyl-[ACP] = (2E)-decenoyl-[ACP] + H2O. The catalysed reaction is (2E)-decenoyl-[ACP] = (3Z)-decenoyl-[ACP]. It functions in the pathway lipid metabolism; fatty acid biosynthesis. Necessary for the introduction of cis unsaturation into fatty acids. Catalyzes the dehydration of (3R)-3-hydroxydecanoyl-ACP to E-(2)-decenoyl-ACP and then its isomerization to Z-(3)-decenoyl-ACP. Can catalyze the dehydratase reaction for beta-hydroxyacyl-ACPs with saturated chain lengths up to 16:0, being most active on intermediate chain length. The polypeptide is 3-hydroxydecanoyl-[acyl-carrier-protein] dehydratase (Maricaulis maris (strain MCS10) (Caulobacter maris)).